The chain runs to 120 residues: uncharacterized protein (120 aa).

The protein localises to the cytoplasm. It localises to the nucleus. This is an uncharacterized protein from Schizosaccharomyces pombe (strain 972 / ATCC 24843) (Fission yeast).